The chain runs to 175 residues: Zinc metalloproteinase-disintegrin-like catroriarin (175 aa).

A Disintegrin domain is found at 1 to 63; it reads NPCCDAATCK…ECPADVFHKN (63 aa). 9 disulfides stabilise this stretch: Cys3/Cys26, Cys17/Cys23, Cys22/Cys48, Cys35/Cys55, Cys42/Cys74, Cys67/Cys79, Cys101/Cys147, Cys114/Cys124, and Cys131/Cys171. Positions 41–43 match the D/ECD-tripeptide motif; the sequence is ECD. Ca(2+) is bound by residues Asp43, Pro44, Glu46, Asp58, and Val59.

The protein belongs to the venom metalloproteinase (M12B) family. P-III subfamily. P-IIIa sub-subfamily. In terms of assembly, monomer. Zn(2+) serves as cofactor. Glycosylated. In terms of tissue distribution, expressed by the venom gland.

It localises to the secreted. Its function is as follows. Snake venom metalloproteinase that impairs hemostasis in the envenomed animal. The polypeptide is Zinc metalloproteinase-disintegrin-like catroriarin (Crotalus atrox (Western diamondback rattlesnake)).